The following is a 417-amino-acid chain: MIVYSELSLKGKKAKDAAYKLGSLSSQVKNKALEAMAYALVAQEEEILAANALDMEAGRQKGMSKALLDRLMLNKKRIEEMAEGLYALVSLPDPIGEVKRQWRRPNGLEIGQVRVPLGVVGIIYEARPNVTVDAAGLCLKTGNAVILRGGSEAIRSNMAIVKAISKASEEAGIPEGAIQLVEDSSREVAQQMMTMNEYLDVLIPRGGAGLIQAVVKNATVPVIETGVGNCHIYVDADADLEMAEKIIINAKCQRPGVCNAAESLLVHQDVARKFIPHIGKVLTEMNVELRGCPRTLSLFSGIKEATDEDYATEFLDLILAVKIVDSFDEALEHIRKYSTGHSEAIVTRDYSRAREFTRRVDAAAVYVNASTRFTDGFQFGMGAEIGISTQKLHARGPMGLNELTTIKYVCYGDGQIR.

Belongs to the gamma-glutamyl phosphate reductase family.

The protein resides in the cytoplasm. It catalyses the reaction L-glutamate 5-semialdehyde + phosphate + NADP(+) = L-glutamyl 5-phosphate + NADPH + H(+). Its pathway is amino-acid biosynthesis; L-proline biosynthesis; L-glutamate 5-semialdehyde from L-glutamate: step 2/2. Catalyzes the NADPH-dependent reduction of L-glutamate 5-phosphate into L-glutamate 5-semialdehyde and phosphate. The product spontaneously undergoes cyclization to form 1-pyrroline-5-carboxylate. This is Gamma-glutamyl phosphate reductase from Heliobacterium modesticaldum (strain ATCC 51547 / Ice1).